The following is a 356-amino-acid chain: UDP-N-acetylglucosamine--N-acetylmuramyl-(pentapeptide) pyrophosphoryl-undecaprenol N-acetylglucosamine transferase (356 aa).

UDP-N-acetyl-alpha-D-glucosamine contacts are provided by residues 15–17 (TGG), Asn-127, Arg-163, Ser-191, Ile-244, 263–268 (ALTVSE), and Gln-288.

This sequence belongs to the glycosyltransferase 28 family. MurG subfamily.

The protein resides in the cell inner membrane. It catalyses the reaction di-trans,octa-cis-undecaprenyl diphospho-N-acetyl-alpha-D-muramoyl-L-alanyl-D-glutamyl-meso-2,6-diaminopimeloyl-D-alanyl-D-alanine + UDP-N-acetyl-alpha-D-glucosamine = di-trans,octa-cis-undecaprenyl diphospho-[N-acetyl-alpha-D-glucosaminyl-(1-&gt;4)]-N-acetyl-alpha-D-muramoyl-L-alanyl-D-glutamyl-meso-2,6-diaminopimeloyl-D-alanyl-D-alanine + UDP + H(+). Its pathway is cell wall biogenesis; peptidoglycan biosynthesis. Its function is as follows. Cell wall formation. Catalyzes the transfer of a GlcNAc subunit on undecaprenyl-pyrophosphoryl-MurNAc-pentapeptide (lipid intermediate I) to form undecaprenyl-pyrophosphoryl-MurNAc-(pentapeptide)GlcNAc (lipid intermediate II). The polypeptide is UDP-N-acetylglucosamine--N-acetylmuramyl-(pentapeptide) pyrophosphoryl-undecaprenol N-acetylglucosamine transferase (Klebsiella pneumoniae subsp. pneumoniae (strain ATCC 700721 / MGH 78578)).